Here is a 148-residue protein sequence, read N- to C-terminus: Large ribosomal subunit protein uL13 (148 aa).

The protein belongs to the universal ribosomal protein uL13 family. In terms of assembly, part of the 50S ribosomal subunit.

Functionally, this protein is one of the early assembly proteins of the 50S ribosomal subunit, although it is not seen to bind rRNA by itself. It is important during the early stages of 50S assembly. This Lacticaseibacillus casei (strain BL23) (Lactobacillus casei) protein is Large ribosomal subunit protein uL13.